Here is a 395-residue protein sequence, read N- to C-terminus: Cytochrome b561 and DOMON domain-containing protein At5g47530 (395 aa).

The N-terminal stretch at 1–24 is a signal peptide; sequence MAISSNLLLCLSLFIFIITKSALA. The 116-residue stretch at 47-162 folds into the DOMON domain; sequence LDSFLHYTYD…GIINTVWQDG (116 aa). Residues 176–371 enclose the Cytochrome b561 domain; the sequence is GNNVRSVSTL…LEGFTWYVVI (196 aa). Transmembrane regions (helical) follow at residues 210-230 and 242-262; these read IHGI…AIIA and AWFY…VAGW. 3 residues coordinate heme b: histidine 211, histidine 247, and histidine 280. A helical membrane pass occupies residues 282 to 302; the sequence is AVGIALFCLATIQVFAMFLRP. Histidine 316 serves as a coordination point for heme b. The next 2 helical transmembrane spans lie at 318–338 and 351–371; these read TVGY…LDIL and IIVV…YVVI.

Heme b is required as a cofactor.

It is found in the membrane. Functionally, may act as a catecholamine-responsive trans-membrane electron transporter. The protein is Cytochrome b561 and DOMON domain-containing protein At5g47530 of Arabidopsis thaliana (Mouse-ear cress).